A 180-amino-acid chain; its full sequence is ATP-dependent protease subunit HslV (180 aa).

The active site involves Thr5. Gly165, Cys168, and Thr171 together coordinate Na(+).

This sequence belongs to the peptidase T1B family. HslV subfamily. As to quaternary structure, a double ring-shaped homohexamer of HslV is capped on each side by a ring-shaped HslU homohexamer. The assembly of the HslU/HslV complex is dependent on binding of ATP.

It localises to the cytoplasm. The enzyme catalyses ATP-dependent cleavage of peptide bonds with broad specificity.. Its activity is regulated as follows. Allosterically activated by HslU binding. In terms of biological role, protease subunit of a proteasome-like degradation complex believed to be a general protein degrading machinery. The protein is ATP-dependent protease subunit HslV of Helicobacter pylori (strain ATCC 700392 / 26695) (Campylobacter pylori).